A 1427-amino-acid polypeptide reads, in one-letter code: Protein NPAT (1427 aa).

Positions 1–318 are interaction with MIZF; that stretch reads MLLPSDVARL…EEAIQDILEQ (318 aa). The region spanning 3–35 is the LisH domain; sequence LPSDVARLVLGYLQQENLISTCQTFILESSDLK. Required for activation of histone gene transcription and interaction with MIZF stretches follow at residues 5–25 and 121–145; these read SDVA…STCQ and KRQR…YLSG. The tract at residues 199 to 231 is disordered; sequence KKAHASLMSPGRRKSESQRKSTTLSGPHSTIRN. S207 is subject to Phosphoserine. The span at 218–231 shows a compositional bias: polar residues; the sequence is KSTTLSGPHSTIRN. Positions 262–338 are mediates transcriptional activation; the sequence is KLAENINKFL…FDLFDYGKTK (77 aa). Phosphoserine is present on residues S554 and S599. Over residues 628–644 the composition is skewed to polar residues; sequence SLSSTKQPSNDSASVEL. Disordered regions lie at residues 628–669 and 683–732; these read SLSS…VKEE and EKVA…SAEI. Residues 629-653 form a required for acceleration of G1 phase region; that stretch reads LSSTKQPSNDSASVELNHTENEAQA. Low complexity predominate over residues 654–665; the sequence is SKSENSQEPSSS. Residues 695–711 are compositionally biased toward polar residues; the sequence is VENSHSLPPESVCSSVG. S775 and S779 each carry phosphoserine; by CDK2. 2 required for acceleration of G1 phase regions span residues 828–853 and 1039–1054; these read QNED…IQLM and KSEE…SIVP. 2 disordered regions span residues 1095 to 1121 and 1133 to 1152; these read FPNL…EKEK and SAIS…KVSP. The segment covering 1097–1114 has biased composition (polar residues); the sequence is NLDSPNVSSTLKPPSNNA. S1100 is subject to Phosphoserine; by CDK2. Residues K1116 and K1149 each participate in a glycyl lysine isopeptide (Lys-Gly) (interchain with G-Cter in SUMO2) cross-link. The segment covering 1140–1151 has biased composition (basic and acidic residues); the sequence is TIRETQSEKKVS. Residues S1151 and S1200 each carry the phosphoserine modification. The residue at position 1228 (K1228) is an N6-acetyllysine. Positions 1228–1252 are required for acceleration of G1 phase; sequence KDLKQEQTKSASSLITTEMLQDIQR. Disordered stretches follow at residues 1253-1327 and 1348-1413; these read HSSV…SENS and SATP…FPAG. S1254 is modified (phosphoserine). Residue T1270 is modified to Phosphothreonine; by CDK2. Over residues 1276-1285 the composition is skewed to basic and acidic residues; that stretch reads GEKHKEEPID. K1280 participates in a covalent cross-link: Glycyl lysine isopeptide (Lys-Gly) (interchain with G-Cter in SUMO2). The interval 1325 to 1349 is required for acceleration of G1 phase; that stretch reads ENSVNMAAHTLMILSRAAISRTTSA. Residues 1348–1365 show a composition bias toward polar residues; that stretch reads SATPLKDNTQQFRASSRS. T1350 carries the phosphothreonine; by CDK2 modification. Basic and acidic residues predominate over residues 1371-1382; the sequence is KIEELDERERNS. Polar residues predominate over residues 1383–1394; it reads RPSSKNLTNSSI. Positions 1396–1406 are enriched in basic residues; it reads MKKKKIKKKKL.

The protein belongs to the NPAT family. Interacts with the cylin/CDK complexes CCNE1/CDK2 and CCNA1/CDK2. Interacts with BZW1, CASP8AP2, CREBBP, MIZF and YY1. Interacts with the RUVBL1, RUVBL2 and TRRAP subunits of the NuA4 complex. May also interact with GAPDH, NME1, NME2 and STIP1. Phosphorylated at Ser-775, Ser-779, Ser-1100, Thr-1270 and Thr-1350 by CCNE1/CDK2 at G1-S transition and until prophase, which promotes association with histone gene clusters and stimulates activation of histone transcription. Also phosphorylated by CCNA1/CDK2 in vitro. In terms of tissue distribution, ubiquitously expressed.

The protein resides in the nucleus. Its subcellular location is the cajal body. Its function is as follows. Required for progression through the G1 and S phases of the cell cycle and for S phase entry. Activates transcription of the histone H2A, histone H2B, histone H3 and histone H4 genes in conjunction with MIZF. Also positively regulates the ATM, MIZF and PRKDC promoters. Transcriptional activation may be accomplished at least in part by the recruitment of the NuA4 histone acetyltransferase (HAT) complex to target gene promoters. This is Protein NPAT (NPAT) from Homo sapiens (Human).